The primary structure comprises 260 residues: Hemin import ATP-binding protein HmuV (260 aa).

Residues 6 to 242 enclose the ABC transporter domain; the sequence is LHADNLHYRA…VQLRACYQAD (237 aa). ATP is bound at residue 38 to 45; sequence GPNGAGKS.

It belongs to the ABC transporter superfamily. Heme (hemin) importer (TC 3.A.1.14.5) family. As to quaternary structure, the complex is composed of two ATP-binding proteins (HmuV), two transmembrane proteins (HmuU) and a solute-binding protein (HmuT).

The protein localises to the cell inner membrane. Part of the ABC transporter complex HmuTUV involved in hemin import. Responsible for energy coupling to the transport system. The sequence is that of Hemin import ATP-binding protein HmuV from Sodalis glossinidius (strain morsitans).